Consider the following 212-residue polypeptide: Pyrrolidone-carboxylate peptidase (212 aa).

Residues Glu-78, Cys-141, and His-165 contribute to the active site.

It belongs to the peptidase C15 family. In terms of assembly, homotetramer.

It is found in the cytoplasm. The catalysed reaction is Release of an N-terminal pyroglutamyl group from a polypeptide, the second amino acid generally not being Pro.. In terms of biological role, removes 5-oxoproline from various penultimate amino acid residues except L-proline. The protein is Pyrrolidone-carboxylate peptidase of Staphylococcus aureus (strain NCTC 8325 / PS 47).